The primary structure comprises 196 residues: RNA-binding protein with multiple splicing 2 (196 aa).

The RRM domain occupies 20 to 97 (RTLFVSGLPI…QTLRLEFAKA (78 aa)). Residues 30-40 (DIKPRELYLLF) form an important for homodimerization region.

Homodimer. Expressed in developing heart, pronephros, retina and epiphysis. In adult, high expression in heart, moderate in kidney, undetectable in liver, lung and skeletal muscle.

It is found in the cytoplasm. It localises to the nucleus. The protein resides in the stress granule. RNA-binding protein involved in the regulation of smooth muscle cell differentiation and proliferation in the gastrointestinal system. Binds NOG mRNA, the major inhibitor of the bone morphogenetic protein (BMP) pathway. Mediates an increase of NOG mRNA levels, thereby contributing to the negative regulation of BMP signaling pathway and promoting reversible dedifferentiation and proliferation of smooth muscle cells. Acts as a pre-mRNA alternative splicing regulator. Mediates ACTN1 and FLNB alternative splicing. Likely binds to mRNA tandem CAC trinucleotide or CA dinucleotide motifs. The sequence is that of RNA-binding protein with multiple splicing 2 from Xenopus laevis (African clawed frog).